Reading from the N-terminus, the 213-residue chain is MSSLPALDLFLSKYQQAYVEKLDEQPRYYAQEQESDCVVGEMDSDGAVFWQAVVRQTPGQFDNVETALELTLCAEINAFYGRHFSAPLFFDSKWGSGELIQVWNQTDFEYLQQNIIGHLMMKKKLKQEPTWFIGVLDDEDKMLTVNNSDGSVWVEIPGEVQSSKLAESLNEFISLLTPRVTPPVKLIEESMPELDHPGIWQRMKLMWRNLRGK.

Belongs to the Syd family.

Its subcellular location is the cell inner membrane. Its function is as follows. Interacts with the SecY protein in vivo. May bind preferentially to an uncomplexed state of SecY, thus functioning either as a chelating agent for excess SecY in the cell or as a regulatory factor that negatively controls the translocase function. This is Protein Syd from Shewanella halifaxensis (strain HAW-EB4).